Reading from the N-terminus, the 329-residue chain is Putative 1-aminocyclopropane-1-carboxylate deaminase (329 aa).

The residue at position 54 (lysine 54) is an N6-(pyridoxal phosphate)lysine.

The protein belongs to the ACC deaminase/D-cysteine desulfhydrase family. Requires pyridoxal 5'-phosphate as cofactor.

The catalysed reaction is 1-aminocyclopropane-1-carboxylate + H2O = 2-oxobutanoate + NH4(+). The chain is Putative 1-aminocyclopropane-1-carboxylate deaminase from Pyrococcus furiosus (strain ATCC 43587 / DSM 3638 / JCM 8422 / Vc1).